Reading from the N-terminus, the 1526-residue chain is uncharacterized protein (1526 aa).

16 WD repeats span residues 334 to 376, 862 to 901, 904 to 945, 946 to 985, 988 to 1027, 1030 to 1069, 1072 to 1111, 1114 to 1153, 1156 to 1195, 1198 to 1237, 1240 to 1279, 1282 to 1321, 1324 to 1363, 1366 to 1405, 1408 to 1447, and 1450 to 1491; these read CTKE…EHIS, KILG…ELLT, GHNS…KTFK, GHTS…CLYI, GHTG…CFYI, GHTS…CLYT, GYTS…CLYT, GHTN…CLYI, GHTS…CLCT, GHTS…CLHT, GHTN…CLHT, GHTN…CLYT, GHNN…CLYT, and GHIN…KTLK. One can recognise a Pentapeptide repeat domain in the interval 823–862; sequence MVLEGRDLSHTVIIGADFTNTSLRCVNFTEANLAYSVFTK.

This is an uncharacterized protein from Nostoc sp. (strain PCC 7120 / SAG 25.82 / UTEX 2576).